We begin with the raw amino-acid sequence, 335 residues long: Beta-ketoacyl-[acyl-carrier-protein] synthase III 1 (335 aa).

Catalysis depends on residues C116 and H256. The segment at 257-261 (QANQR) is ACP-binding. N286 is an active-site residue.

The protein belongs to the thiolase-like superfamily. FabH family. As to quaternary structure, homodimer.

It localises to the cytoplasm. It carries out the reaction malonyl-[ACP] + acetyl-CoA + H(+) = 3-oxobutanoyl-[ACP] + CO2 + CoA. It functions in the pathway lipid metabolism; fatty acid biosynthesis. Functionally, catalyzes the condensation reaction of fatty acid synthesis by the addition to an acyl acceptor of two carbons from malonyl-ACP. Catalyzes the first condensation reaction which initiates fatty acid synthesis and may therefore play a role in governing the total rate of fatty acid production. Possesses both acetoacetyl-ACP synthase and acetyl transacylase activities. Its substrate specificity determines the biosynthesis of branched-chain and/or straight-chain of fatty acids. The polypeptide is Beta-ketoacyl-[acyl-carrier-protein] synthase III 1 (Bacteroides thetaiotaomicron (strain ATCC 29148 / DSM 2079 / JCM 5827 / CCUG 10774 / NCTC 10582 / VPI-5482 / E50)).